Here is a 376-residue protein sequence, read N- to C-terminus: Thymidine kinase (376 aa).

Positions 1-44 are disordered; sequence MASYPGHQHASAFDQAARSRGHSNRRTALRPRRQQEATEVRPEQ. Positions 19-32 are enriched in basic residues; that stretch reads SRGHSNRRTALRPR. The segment covering 33–44 has biased composition (basic and acidic residues); the sequence is RQQEATEVRPEQ. 56 to 63 provides a ligand contact to ATP; it reads GPHGMGKT. Catalysis depends on Glu-83, which acts as the Proton acceptor. Substrate is bound by residues Tyr-101 and Gln-125. Arg-216 contacts ATP. Arg-222 lines the substrate pocket. The interval 260–280 is disordered; sequence GQLSGTAVPPQGAEPQSNAGP.

The protein belongs to the herpesviridae thymidine kinase family. Homodimer.

It catalyses the reaction thymidine + ATP = dTMP + ADP + H(+). Catalyzes the transfer of the gamma-phospho group of ATP to thymidine to generate dTMP in the salvage pathway of pyrimidine synthesis. The dTMP serves as a substrate for DNA polymerase during viral DNA replication. Allows the virus to be reactivated and to grow in non-proliferative cells lacking a high concentration of phosphorylated nucleic acid precursors. The polypeptide is Thymidine kinase (Human herpesvirus 1 (strain SC16) (HHV-1)).